Consider the following 211-residue polypeptide: Thiamine-phosphate synthase (211 aa).

Residues 37-41 (QLRIK) and Asn-69 each bind 4-amino-2-methyl-5-(diphosphooxymethyl)pyrimidine. Mg(2+) is bound by residues Asp-70 and Asp-89. Residue Ser-108 coordinates 4-amino-2-methyl-5-(diphosphooxymethyl)pyrimidine. 134-136 (TQT) contributes to the 2-[(2R,5Z)-2-carboxy-4-methylthiazol-5(2H)-ylidene]ethyl phosphate binding site. Lys-137 is a binding site for 4-amino-2-methyl-5-(diphosphooxymethyl)pyrimidine. Residues Gly-166 and 186–187 (VS) each bind 2-[(2R,5Z)-2-carboxy-4-methylthiazol-5(2H)-ylidene]ethyl phosphate.

Belongs to the thiamine-phosphate synthase family. The cofactor is Mg(2+).

The enzyme catalyses 2-[(2R,5Z)-2-carboxy-4-methylthiazol-5(2H)-ylidene]ethyl phosphate + 4-amino-2-methyl-5-(diphosphooxymethyl)pyrimidine + 2 H(+) = thiamine phosphate + CO2 + diphosphate. It catalyses the reaction 2-(2-carboxy-4-methylthiazol-5-yl)ethyl phosphate + 4-amino-2-methyl-5-(diphosphooxymethyl)pyrimidine + 2 H(+) = thiamine phosphate + CO2 + diphosphate. It carries out the reaction 4-methyl-5-(2-phosphooxyethyl)-thiazole + 4-amino-2-methyl-5-(diphosphooxymethyl)pyrimidine + H(+) = thiamine phosphate + diphosphate. Its pathway is cofactor biosynthesis; thiamine diphosphate biosynthesis; thiamine phosphate from 4-amino-2-methyl-5-diphosphomethylpyrimidine and 4-methyl-5-(2-phosphoethyl)-thiazole: step 1/1. Its function is as follows. Condenses 4-methyl-5-(beta-hydroxyethyl)thiazole monophosphate (THZ-P) and 2-methyl-4-amino-5-hydroxymethyl pyrimidine pyrophosphate (HMP-PP) to form thiamine monophosphate (TMP). This is Thiamine-phosphate synthase from Salmonella schwarzengrund (strain CVM19633).